We begin with the raw amino-acid sequence, 196 residues long: SAGA-associated factor 11 homolog (196 aa).

The disordered stretch occupies residues 1 to 22 (MSAANMPTTTGAQGSGNQVPTT). The SGF11-type zinc finger occupies 106-127 (CTCPNCDRLVAAARFAPHLEKC). Positions 144-196 (TKEGATSAHLHSAGNTGGTDDEDDVDWSSDKRRKKSNQNSRNNGSKKNNGKSF) are disordered. A Phosphoserine modification is found at Ser-172. Residues 180-196 (NQNSRNNGSKKNNGKSF) are compositionally biased toward low complexity.

It belongs to the SGF11 family. As to quaternary structure, component of some SAGA transcription coactivator-HAT complexes, at least composed of Ada2b, not/nonstop, Pcaf/Gcn5, Sgf11 and Spt3. Within the SAGA complex, Sgf11, e(y)2, and not/nonstop form an additional subcomplex of SAGA called the DUB module (deubiquitination module). Interacts directly with not/nonstop. Interacts with the AMEX complex component xmas-2. Interacts with Cbp80; important for promoter recruitment of Sgf11 that is not associated with the DUB module.

The protein resides in the nucleus. It localises to the nucleoplasm. The protein localises to the cytoplasm. Component of the transcription regulatory histone acetylation (HAT) complex SAGA, a multiprotein complex that activates transcription by remodeling chromatin and mediating histone acetylation and deubiquitination. Within the SAGA complex, participates in a subcomplex that specifically deubiquitinates histone H2B. The SAGA complex is recruited to specific gene promoters by activators, where it is required for transcription. Required for nuclear receptor-mediated transactivation. Binds independently on SAGA to promoters in an RNA-dependent manner. Binds to mRNA and is essential for total mRNA export from the nucleus. Required to counteract heterochromatin silencing. Controls the development of neuronal connectivity in visual system by being required for accurate axon targeting in the optic lobe. Required for expression of ecdysone-induced genes such as br/broad. This Drosophila erecta (Fruit fly) protein is SAGA-associated factor 11 homolog.